The chain runs to 134 residues: UPF0412 protein YaaI (134 aa).

The first 23 residues, 1–23 (MKSVFTISASLAISLMLCCTAQA), serve as a signal peptide directing secretion.

It belongs to the UPF0412 family.

This is UPF0412 protein YaaI from Escherichia coli (strain ATCC 8739 / DSM 1576 / NBRC 3972 / NCIMB 8545 / WDCM 00012 / Crooks).